The primary structure comprises 374 residues: 4-hydroxy-3-methylbut-2-en-1-yl diphosphate synthase (flavodoxin) (374 aa).

Residues cysteine 270, cysteine 273, cysteine 305, and glutamate 312 each coordinate [4Fe-4S] cluster.

It belongs to the IspG family. It depends on [4Fe-4S] cluster as a cofactor.

It carries out the reaction (2E)-4-hydroxy-3-methylbut-2-enyl diphosphate + oxidized [flavodoxin] + H2O + 2 H(+) = 2-C-methyl-D-erythritol 2,4-cyclic diphosphate + reduced [flavodoxin]. It functions in the pathway isoprenoid biosynthesis; isopentenyl diphosphate biosynthesis via DXP pathway; isopentenyl diphosphate from 1-deoxy-D-xylulose 5-phosphate: step 5/6. Converts 2C-methyl-D-erythritol 2,4-cyclodiphosphate (ME-2,4cPP) into 1-hydroxy-2-methyl-2-(E)-butenyl 4-diphosphate. The chain is 4-hydroxy-3-methylbut-2-en-1-yl diphosphate synthase (flavodoxin) from Vibrio cholerae serotype O1 (strain ATCC 39315 / El Tor Inaba N16961).